A 254-amino-acid polypeptide reads, in one-letter code: UDP-2,3-diacylglucosamine hydrolase (254 aa).

D8, H10, D41, N79, and H114 together coordinate Mn(2+). 79 to 80 (NR) contributes to the substrate binding site. 5 residues coordinate substrate: D122, S160, N164, K167, and H195. Mn(2+) is bound by residues H195 and H197.

The protein belongs to the LpxH family. The cofactor is Mn(2+).

The protein localises to the cell inner membrane. The enzyme catalyses UDP-2-N,3-O-bis[(3R)-3-hydroxytetradecanoyl]-alpha-D-glucosamine + H2O = 2-N,3-O-bis[(3R)-3-hydroxytetradecanoyl]-alpha-D-glucosaminyl 1-phosphate + UMP + 2 H(+). Its pathway is glycolipid biosynthesis; lipid IV(A) biosynthesis; lipid IV(A) from (3R)-3-hydroxytetradecanoyl-[acyl-carrier-protein] and UDP-N-acetyl-alpha-D-glucosamine: step 4/6. In terms of biological role, hydrolyzes the pyrophosphate bond of UDP-2,3-diacylglucosamine to yield 2,3-diacylglucosamine 1-phosphate (lipid X) and UMP by catalyzing the attack of water at the alpha-P atom. Involved in the biosynthesis of lipid A, a phosphorylated glycolipid that anchors the lipopolysaccharide to the outer membrane of the cell. This is UDP-2,3-diacylglucosamine hydrolase from Aeromonas salmonicida (strain A449).